An 800-amino-acid chain; its full sequence is MGGVTMKNNLKKYIKYILSVILVFFVGVNGMEVYALEESRDVYLSDLDWLNATHGDDTKSKIVQKNHPFTPGNNNQSTKISLKMEDGSISEFEKGLGTIAGSPSTITYDISGAGVTKFFSYLGIDRSANPINEQYAKVDKIEVVVDGKVIYSTINQFPNGLTYETPAIKVDLNIPENAKRLQLKSYAGEKTWGDEVVYADAKFTAKGDFVNPNDWTPAEKRREISNEKPLLMIPLYANGSKYEKGDYAFWGDDTLVGKWKEVPDDLKPYTVIQLHPDDLPKRDGVAADFYEHMLNEAQSYVNPKTNKNEPIPIVLTVYTAGNVPGYTAAHWLTTEWIEDMYSKYSALQGVFSTENYWVWTDNVESNAAEYLKLSAKYGGYFIWSEQNNGGSIEKAFGSNGKTVFKEAVEKYWENFIFMYKNTPQAEGNDAPTSSYMTGLWLTDYAYQWGGLMDTWKWYETGKWKLFESGNIGKTQGNRQWLTEPEALLGIEAMNIYLNGGCVYNFEHPAYTYGVRNEESPLFSNVIKEFFRYVINNPSPSKNEMRAKTKSLLYGNFTQNGNGNYFVGLNTEMSQSPAYTTGRYGNIPAVPSSIERNKIESRLSGSQIKLIDMNSSELSNITNRKEYFNKLYKEEYNGNIFAQKLDNRWFIYNYKYNENINQKGSFDIANIKSEVTLEPHTYLIMEDNNQSINIKLNNYRTNKDSLWEGAKNADEAKKLPEMSKVDALNWVYDSYIKNTNNGEKRTSVIKLMNIDKAPTITNVNGIEGSYDIPTVKYNSETRSAEITIKNNGNIDFDIVIK.

The first 35 residues, 1–35, serve as a signal peptide directing secretion; that stretch reads MGGVTMKNNLKKYIKYILSVILVFFVGVNGMEVYA.

The protein belongs to the glycosyl hydrolase 98 family.

It localises to the secreted. The catalysed reaction is Endohydrolysis of (1-&gt;4)-beta-D-galactosidic linkages in blood group A and B substances.. Functionally, endo-beta-galactosidase capable of releasing both the blood group A trisaccharide (A-Tri; GalNAcalpha1--&gt;3(Fucalpha1--&gt;2)Gal) and B trisaccharide (B-Tri; Galalpha1--&gt;3(Fucalpha1--&gt;2)Gal) glycotopes from blood group A- and B-containing glycoconjugates, respectively. The polypeptide is Blood-group-substance endo-1,4-beta-galactosidase (eabC) (Clostridium perfringens).